The chain runs to 900 residues: DNA mismatch repair protein MutS (900 aa).

637–644 (GPNMAGKS) is a binding site for ATP.

Belongs to the DNA mismatch repair MutS family.

In terms of biological role, this protein is involved in the repair of mismatches in DNA. It is possible that it carries out the mismatch recognition step. This protein has a weak ATPase activity. The chain is DNA mismatch repair protein MutS from Methanosarcina acetivorans (strain ATCC 35395 / DSM 2834 / JCM 12185 / C2A).